The primary structure comprises 227 residues: Neuromodulin (227 aa).

The tract at residues 1–227 (MLCCMRRTKQ…EDPEADQEHA (227 aa)) is disordered. S-palmitoyl cysteine attachment occurs at residues cysteine 3 and cysteine 4. The segment covering 9 to 32 (KQVEKNDEDQKIEQDGVKPEDKAH) has biased composition (basic and acidic residues). One can recognise an IQ domain in the interval 31-60 (AHKAATKIQASFRGHITRKKLKGEKKGDAP). Residue serine 41 is modified to Phosphoserine; by PHK. The span at 54–84 (EKKGDAPAAEAEAKEKDDAPVADGVEKKEGD) shows a compositional bias: basic and acidic residues. Low complexity predominate over residues 85–97 (GSATTDAAPATSP). Phosphoserine occurs at positions 86 and 96. Positions 98–127 (KAEEPSKAGDAPSEEKKGEGDAAPSEEKAG) are enriched in basic and acidic residues. Over residues 128 to 139 (SAETESAAKATT) the composition is skewed to low complexity. At threonine 138 the chain carries Phosphothreonine. Phosphoserine is present on residues serine 142, serine 144, and serine 145. Basic and acidic residues predominate over residues 146 to 158 (KAEDGPAKEEPKQ). The span at 159–193 (ADVPAAVTDAAATTPAAEDAATKAAQPPTETAESS) shows a compositional bias: low complexity. Threonine 172 bears the Phosphothreonine mark. Phosphoserine; by CK2 is present on residues serine 192 and serine 193. Residues 202–215 (VDEAKPKESARQDE) are compositionally biased toward basic and acidic residues. A compositionally biased stretch (acidic residues) spans 216–227 (GKEDPEADQEHA).

It belongs to the neuromodulin family. As to quaternary structure, identified in a complex containing FGFR4, NCAM1, CDH2, PLCG1, FRS2, SRC, SHC1, GAP43 and CTTN. Interacts (via IQ domain) with calmodulin. Binds calmodulin with a greater affinity in the absence of Ca(2+) than in its presence. In terms of processing, phosphorylated. Phosphorylation of this protein by a protein kinase C is specifically correlated with certain forms of synaptic plasticity. Post-translationally, palmitoylated by ZDHHC3. Palmitoylation is regulated by ARF6 and is essential for plasma membrane association and axonal and dendritic filopodia induction. Deacylated by LYPLA2. In terms of tissue distribution, expressed in the hippocampus (at protein level). Expressed in the dorsal root ganglion and the spinal cord (at protein level).

The protein resides in the cell membrane. The protein localises to the cell projection. Its subcellular location is the growth cone membrane. It localises to the synapse. It is found in the filopodium membrane. The protein resides in the perikaryon. The protein localises to the dendrite. Its subcellular location is the axon. It localises to the cytoplasm. This protein is associated with nerve growth. It is a major component of the motile 'growth cones' that form the tips of elongating axons. Plays a role in axonal and dendritic filopodia induction. The protein is Neuromodulin (Gap43) of Mus musculus (Mouse).